A 429-amino-acid chain; its full sequence is 4-hydroxyphenylacetate degradation bifunctional isomerase/decarboxylase (429 aa).

Approximate repeat units follow at residues 1–215 (MKGT…NQTF) and 216–429 (TWPL…ESAN). Residues Glu-276, Glu-278, and Asp-307 each coordinate a divalent metal cation.

The protein belongs to the FAH family. As to quaternary structure, monomer. It depends on Mg(2+) as a cofactor.

It catalyses the reaction (2E,4Z)-5-hydroxypenta-2,4-diene-1,2,5-tricarboxylate = (3E,5R)-5-carboxy-2-oxohept-3-enedioate. The catalysed reaction is (3E,5R)-5-carboxy-2-oxohept-3-enedioate + H(+) = (4Z)-2-oxohept-4-enedioate + CO2. Its pathway is aromatic compound metabolism; 4-hydroxyphenylacetate degradation; pyruvate and succinate semialdehyde from 4-hydroxyphenylacetate: step 4/7. It participates in aromatic compound metabolism; 4-hydroxyphenylacetate degradation; pyruvate and succinate semialdehyde from 4-hydroxyphenylacetate: step 5/7. Decarboxylates OPET (5-oxo-pent-3-ene-1,2,5-tricarboxylic acid) into HHDD (2-hydroxy-hept-2,4-diene-1,7-dioate) and isomerizes it to OHED (2-oxo-hept-3-ene-1,7-dioate). The polypeptide is 4-hydroxyphenylacetate degradation bifunctional isomerase/decarboxylase (hpaG) (Salmonella dublin).